We begin with the raw amino-acid sequence, 412 residues long: Serine hydroxymethyltransferase (412 aa).

(6S)-5,6,7,8-tetrahydrofolate contacts are provided by residues L117 and 121–123 (GHL). At K226 the chain carries N6-(pyridoxal phosphate)lysine. Position 241 (E241) interacts with (6S)-5,6,7,8-tetrahydrofolate.

It belongs to the SHMT family. In terms of assembly, homodimer. The cofactor is pyridoxal 5'-phosphate.

It is found in the cytoplasm. The enzyme catalyses (6R)-5,10-methylene-5,6,7,8-tetrahydrofolate + glycine + H2O = (6S)-5,6,7,8-tetrahydrofolate + L-serine. It participates in one-carbon metabolism; tetrahydrofolate interconversion. Its pathway is amino-acid biosynthesis; glycine biosynthesis; glycine from L-serine: step 1/1. Functionally, catalyzes the reversible interconversion of serine and glycine with tetrahydrofolate (THF) serving as the one-carbon carrier. This reaction serves as the major source of one-carbon groups required for the biosynthesis of purines, thymidylate, methionine, and other important biomolecules. Also exhibits THF-independent aldolase activity toward beta-hydroxyamino acids, producing glycine and aldehydes, via a retro-aldol mechanism. The sequence is that of Serine hydroxymethyltransferase from Staphylococcus carnosus (strain TM300).